The chain runs to 145 residues: Secreted RxLR effector protein 43 (145 aa).

Residues 1 to 20 (MKVTMALAALCVALQAPCIG) form the signal peptide. The short motif at 31–34 (RHLR) is the RxLR element.

It belongs to the RxLR effector family.

The protein localises to the secreted. Its subcellular location is the host nucleus. The protein resides in the host cytoplasm. Functionally, secreted effector that completely suppresses the host cell death induced by cell death-inducing proteins. The sequence is that of Secreted RxLR effector protein 43 from Plasmopara viticola (Downy mildew of grapevine).